Here is a 106-residue protein sequence, read N- to C-terminus: Large ribosomal subunit protein uL24 (106 aa).

It belongs to the universal ribosomal protein uL24 family. As to quaternary structure, part of the 50S ribosomal subunit.

In terms of biological role, one of two assembly initiator proteins, it binds directly to the 5'-end of the 23S rRNA, where it nucleates assembly of the 50S subunit. One of the proteins that surrounds the polypeptide exit tunnel on the outside of the subunit. This chain is Large ribosomal subunit protein uL24, found in Rhodospirillum rubrum (strain ATCC 11170 / ATH 1.1.1 / DSM 467 / LMG 4362 / NCIMB 8255 / S1).